A 464-amino-acid polypeptide reads, in one-letter code: Probable 3-ketoacyl-CoA synthase 21 (464 aa).

Residues 21 to 41 (LLSSGVSVFEIFAGLLVVHLI) form a helical membrane-spanning segment. In terms of domain architecture, FAE spans 42-333 (YQRIRTRVKV…VIQHILCKKL (292 aa)). Active-site residues include Cys187, His352, His356, His385, and Asn389.

This sequence belongs to the thiolase-like superfamily. Chalcone/stilbene synthases family. Expressed in flowers.

The protein resides in the membrane. It catalyses the reaction a very-long-chain acyl-CoA + malonyl-CoA + H(+) = a very-long-chain 3-oxoacyl-CoA + CO2 + CoA. It participates in lipid metabolism; fatty acid biosynthesis. The sequence is that of Probable 3-ketoacyl-CoA synthase 21 from Arabidopsis thaliana (Mouse-ear cress).